Consider the following 98-residue polypeptide: Sec-independent protein translocase protein TatA (98 aa).

The chain crosses the membrane as a helical span at residues 1–21 (MGAMSPWHWAIVALVVVILFG). The disordered stretch occupies residues 43 to 98 (VKEMQNDNSTPAPTAQSAPPPQSAPAELPVADTTTAPVTPPAPVQPQSQHTEPKSA). The span at 66 to 79 (APAELPVADTTTAP) shows a compositional bias: low complexity.

This sequence belongs to the TatA/E family. In terms of assembly, the Tat system comprises two distinct complexes: a TatABC complex, containing multiple copies of TatA, TatB and TatC subunits, and a separate TatA complex, containing only TatA subunits. Substrates initially bind to the TatABC complex, which probably triggers association of the separate TatA complex to form the active translocon.

The protein localises to the cell membrane. Part of the twin-arginine translocation (Tat) system that transports large folded proteins containing a characteristic twin-arginine motif in their signal peptide across membranes. TatA could form the protein-conducting channel of the Tat system. This is Sec-independent protein translocase protein TatA from Rhodococcus erythropolis (Arthrobacter picolinophilus).